Reading from the N-terminus, the 437-residue chain is Proline--tRNA ligase (437 aa).

This sequence belongs to the class-II aminoacyl-tRNA synthetase family. ProS type 2 subfamily. As to quaternary structure, homodimer.

The protein localises to the cytoplasm. The catalysed reaction is tRNA(Pro) + L-proline + ATP = L-prolyl-tRNA(Pro) + AMP + diphosphate. In terms of biological role, catalyzes the attachment of proline to tRNA(Pro) in a two-step reaction: proline is first activated by ATP to form Pro-AMP and then transferred to the acceptor end of tRNA(Pro). The sequence is that of Proline--tRNA ligase from Rhizorhabdus wittichii (strain DSM 6014 / CCUG 31198 / JCM 15750 / NBRC 105917 / EY 4224 / RW1) (Sphingomonas wittichii).